A 359-amino-acid polypeptide reads, in one-letter code: Transcription factor MafA (359 aa).

Residue serine 14 is modified to Phosphoserine. Lysine 32 is covalently cross-linked (Glycyl lysine isopeptide (Lys-Gly) (interchain with G-Cter in SUMO2)). 2 disordered regions span residues 40–105 (RFCH…VGGA) and 172–226 (GGGA…AGHH). Residues 46–73 (PPGSLSSTPLSTPCSSVPSSPSFCAPSP) show a composition bias toward low complexity. The residue at position 49 (serine 49) is a Phosphoserine. Phosphothreonine is present on residues threonine 53 and threonine 57. Residues serine 61 and serine 65 each carry the phosphoserine modification. Residues 74 to 84 (GTGGGAGGGGS) are compositionally biased toward gly residues. A compositionally biased stretch (basic residues) spans 181 to 209 (GHHHGAHHTAHHHHSAHHHHHHHHHHGGS). A compositionally biased stretch (gly residues) spans 210 to 224 (GHHGGGAGHGGGGAG). Residues 260–285 (RLKQKRRTLKNRGYAQSCRFKRVQQR) are basic motif. Residues 260-323 (RLKQKRRTLK…DLYKEKYEKL (64 aa)) enclose the bZIP domain. The interval 288-309 (LESEKCQLQSQVEQLKLEVGRL) is leucine-zipper. The tract at residues 322–359 (KLAGRGGPGGAGGAGFPREPSPAQAGPGAAKGAPDFFL) is disordered. The span at 325–336 (GRGGPGGAGGAG) shows a compositional bias: gly residues. Positions 343-359 (PAQAGPGAAKGAPDFFL) are enriched in low complexity.

It belongs to the bZIP family. Maf subfamily. Forms homodimers. Interacts with NEUROD1 and PDX1. May interact with MAFB, FOS, JUN and PCAF. Post-translationally, ubiquitinated, leading to its degradation by the proteasome. Phosphorylated at tyrosines. As to expression, expressed in brain, lung, spleen, pancreas and kidney. In the pancreas, expressed in the insulin-producing beta-cells of the islets of Langerhans (at protein level). Also expressed in the eye.

The protein resides in the nucleus. Transcriptional factor that activates insulin gene expression. Acts synergistically with NEUROD1/BETA2 and PDX1. Binds the insulin enhancer C1/RIPE3b element. Binds to consensus TRE-type MARE 5'-TGCTGACTCAGCA-3' DNA sequence. In Mus musculus (Mouse), this protein is Transcription factor MafA (Mafa).